The following is a 507-amino-acid chain: Protein FAM221B (507 aa).

Disordered stretches follow at residues 1-100, 154-310, and 486-507; these read MEAD…SAQS, LLSP…ESRP, and ETKRRGKRPYGTNTAKNRHRPF. Polar residues predominate over residues 88 to 100; sequence NLPSTPSQSSAQS. Residues 167–177 show a composition bias toward acidic residues; it reads SISDVQEEPLE. Polar residues predominate over residues 182-193; sequence ADISETEYSISD. Acidic residues-rich tracts occupy residues 208 to 222 and 270 to 281; these read PESEDYISDDHEEPL and SADEEEAEEEEL. S270 carries the post-translational modification Phosphoserine.

Belongs to the FAM221 family.

The chain is Protein FAM221B (Fam221b) from Rattus norvegicus (Rat).